The primary structure comprises 66 residues: Sec-independent protein translocase protein TatA (66 aa).

Residues 1 to 21 traverse the membrane as a helical segment; the sequence is MSIGIWQIAIVVILVVLLFGR. The interval 43–66 is disordered; sequence ATDITDEPEPKNVSENNQDSKDKE. Residues 50–66 show a composition bias toward basic and acidic residues; sequence PEPKNVSENNQDSKDKE.

This sequence belongs to the TatA/E family. The Tat system comprises two distinct complexes: a TatABC complex, containing multiple copies of TatA, TatB and TatC subunits, and a separate TatA complex, containing only TatA subunits. Substrates initially bind to the TatABC complex, which probably triggers association of the separate TatA complex to form the active translocon.

Its subcellular location is the cell inner membrane. Its function is as follows. Part of the twin-arginine translocation (Tat) system that transports large folded proteins containing a characteristic twin-arginine motif in their signal peptide across membranes. TatA could form the protein-conducting channel of the Tat system. This chain is Sec-independent protein translocase protein TatA, found in Pelagibacter ubique (strain HTCC1062).